The chain runs to 363 residues: Aminomethyltransferase (363 aa).

It belongs to the GcvT family. The glycine cleavage system is composed of four proteins: P, T, L and H.

It catalyses the reaction N(6)-[(R)-S(8)-aminomethyldihydrolipoyl]-L-lysyl-[protein] + (6S)-5,6,7,8-tetrahydrofolate = N(6)-[(R)-dihydrolipoyl]-L-lysyl-[protein] + (6R)-5,10-methylene-5,6,7,8-tetrahydrofolate + NH4(+). In terms of biological role, the glycine cleavage system catalyzes the degradation of glycine. The polypeptide is Aminomethyltransferase (Picosynechococcus sp. (strain ATCC 27264 / PCC 7002 / PR-6) (Agmenellum quadruplicatum)).